A 236-amino-acid chain; its full sequence is Thymidylate kinase (236 aa).

Residue 9-16 (GPEGSGKS) coordinates ATP.

Belongs to the thymidylate kinase family.

The catalysed reaction is dTMP + ATP = dTDP + ADP. In terms of biological role, phosphorylation of dTMP to form dTDP in both de novo and salvage pathways of dTTP synthesis. In Herpetosiphon aurantiacus (strain ATCC 23779 / DSM 785 / 114-95), this protein is Thymidylate kinase.